Consider the following 169-residue polypeptide: Ribosome maturation factor RimM (169 aa).

Positions 97–169 constitute a PRC barrel domain; it reads EDEVYFKDLI…KIVVDWEYDY (73 aa).

The protein belongs to the RimM family. As to quaternary structure, binds ribosomal protein uS19.

The protein resides in the cytoplasm. An accessory protein needed during the final step in the assembly of 30S ribosomal subunit, possibly for assembly of the head region. Essential for efficient processing of 16S rRNA. May be needed both before and after RbfA during the maturation of 16S rRNA. It has affinity for free ribosomal 30S subunits but not for 70S ribosomes. The protein is Ribosome maturation factor RimM of Francisella tularensis subsp. tularensis (strain FSC 198).